The sequence spans 319 residues: MDQNNSLPPYAQGLASPQGAMTPGIPIFSPMMPYGTGLTPQPIQNTNSLSILEEQQRQQQQQQQQQQQQQQQQQQQAAVAAVQQSTSQQATQGPSGQTPQLFHSQTLTTAPLPGTTPLYPSPMTPMTPITPATPASESSGIVPQLQNIVSTVNLGCKLDLKTIALRARNAEYNPKRFAAVIMRIREPRTTALIFSSGKMVCTGAKSEEQSRLAARKYARVVQKLGFPAKFLDFKIQNMVGSCDVKFPIRLEGLVLTHQQFSSYEPELFPGLIYRMIKPRIVLLIFVSGKVVLTGAKVRAEIYEAFENIYPILKGFRKTT.

2 disordered regions span residues 1-21 (MDQN…QGAM) and 107-139 (LTTA…SESS). 2 stretches are compositionally biased toward low complexity: residues 107–118 (LTTAPLPGTTPL) and 126–136 (MTPITPATPAS). 2 consecutive repeat copies span residues 145-221 (LQNI…ARVV) and 235-312 (IQNM…YPIL). Residues Asn147, Arg183, Lys198, Asn237, and Arg274 each contribute to the DNA site.

The protein belongs to the TBP family. In terms of assembly, binds DNA as monomer. Belongs to the TFIID complex together with the TBP-associated factors (TAFs). Part of a TFIID-containing RNA polymerase II pre-initiation complex that is composed of TBP and at least GTF2A1, GTF2A2, GTF2E1, GTF2E2, GTF2F1, GTF2H2, GTF2H3, GTF2H4, GTF2H5, GTF2B, TCEA1, ERCC2, ERCC3, TAF1, TAF2, TAF3, TAF4, TAF5, TAF6, TAF7, TAF8, TAF9, TAF10, TAF11, TAF12 and TAF13. Component of the transcription factor SL1/TIF-IB complex, composed of TBP and at least TAF1A, TAF1B, TAF1C and TAF1D. Association of TBP to form either TFIID or SL1/TIF-IB appears to be mutually exclusive. Interacts with TAF1A, TAF1B and TAF1C. Interacts with TFIIB, NCOA6, DRAP1, DR1 and ELF3. Interacts with SPIB, SNAPC1, SNAPC2 and SNAPC4. Interacts with UTF1. Interacts with BRF2; this interaction promotes recruitment of BRF2 to TATA box-containing promoters. Interacts with UBTF. Interacts with GPBP1. Interacts with CITED2. Interacts with ATF7IP. Interacts with LLPH. Interacts with GTF2B (via C-terminus); this interaction with promoter-bound TBP guides RNA polymerase II into the pre-initiation complex (PIC). Interacts with PAX5. Interacts with MSX1; the interaction may inhibit MSX1 autoinactivation. Interacts with MSX3.

It is found in the nucleus. Functionally, general transcription factor that functions at the core of the DNA-binding multiprotein factor TFIID. Binding of TFIID to the TATA box is the initial transcriptional step of the pre-initiation complex (PIC), playing a role in the activation of eukaryotic genes transcribed by RNA polymerase II. Component of a BRF2-containing transcription factor complex that regulates transcription mediated by RNA polymerase III. Component of the transcription factor SL1/TIF-IB complex, which is involved in the assembly of the PIC (pre-initiation complex) during RNA polymerase I-dependent transcription. The rate of PIC formation probably is primarily dependent on the rate of association of SL1 with the rDNA promoter. SL1 is involved in stabilization of nucleolar transcription factor 1/UBTF on rDNA. The sequence is that of TATA-box-binding protein (TBP) from Bos taurus (Bovine).